A 245-amino-acid chain; its full sequence is Proteasome subunit alpha type-7-1B (245 aa).

The protein belongs to the peptidase T1A family. The 26S proteasome consists of a 20S proteasome core and two 19S regulatory subunits. The 20S proteasome core is composed of 28 subunits that are arranged in four stacked rings, resulting in a barrel-shaped structure. The two end rings are each formed by seven alpha subunits, and the two central rings are each formed by seven beta subunits. The catalytic chamber with the active sites is on the inside of the barrel. As to expression, testis specific.

It is found in the cytoplasm. It localises to the nucleus. Functionally, the proteasome is a multicatalytic proteinase complex which is characterized by its ability to cleave peptides with Arg, Phe, Tyr, Leu, and Glu adjacent to the leaving group at neutral or slightly basic pH. The proteasome has an ATP-dependent proteolytic activity. The protein is Proteasome subunit alpha type-7-1B (Pros28.1B) of Drosophila virilis (Fruit fly).